A 632-amino-acid polypeptide reads, in one-letter code: Chaperone protein HtpG (632 aa).

Positions 1 to 343 are a; substrate-binding; it reads MSEQTINNKE…SNDLALNVSR (343 aa). Residues 344-560 form a b region; it reads EILQDNKVTQ…DFEMGTQMAK (217 aa). A c region spans residues 561 to 632; sequence LLEAAGQAAP…LSAMNQLLSK (72 aa).

This sequence belongs to the heat shock protein 90 family. Homodimer.

The protein resides in the cytoplasm. In terms of biological role, molecular chaperone. Has ATPase activity. The polypeptide is Chaperone protein HtpG (Aliivibrio salmonicida (strain LFI1238) (Vibrio salmonicida (strain LFI1238))).